We begin with the raw amino-acid sequence, 207 residues long: Large ribosomal subunit protein uL3 (207 aa).

Belongs to the universal ribosomal protein uL3 family. Part of the 50S ribosomal subunit. Forms a cluster with proteins L14 and L19.

Functionally, one of the primary rRNA binding proteins, it binds directly near the 3'-end of the 23S rRNA, where it nucleates assembly of the 50S subunit. In Desulforapulum autotrophicum (strain ATCC 43914 / DSM 3382 / VKM B-1955 / HRM2) (Desulfobacterium autotrophicum), this protein is Large ribosomal subunit protein uL3.